The primary structure comprises 195 residues: dTTP/UTP pyrophosphatase (195 aa).

D77 functions as the Proton acceptor in the catalytic mechanism.

It belongs to the Maf family. YhdE subfamily. The cofactor is a divalent metal cation.

The protein resides in the cytoplasm. The enzyme catalyses dTTP + H2O = dTMP + diphosphate + H(+). It carries out the reaction UTP + H2O = UMP + diphosphate + H(+). Its function is as follows. Nucleoside triphosphate pyrophosphatase that hydrolyzes dTTP and UTP. May have a dual role in cell division arrest and in preventing the incorporation of modified nucleotides into cellular nucleic acids. This is dTTP/UTP pyrophosphatase from Flavobacterium psychrophilum (strain ATCC 49511 / DSM 21280 / CIP 103535 / JIP02/86).